The following is a 74-amino-acid chain: MRTTLQIDDDVLEDARSIARSEGKSVGAVISELARRSLRPVGIVEVDGFPVFDVPPDAPTVTSEDVVRALEDDV.

Functionally, antitoxin component of a type II toxin-antitoxin (TA) system. The protein is Antitoxin VapB39 (vapB39) of Mycobacterium tuberculosis (strain CDC 1551 / Oshkosh).